A 447-amino-acid polypeptide reads, in one-letter code: N-succinylarginine dihydrolase (447 aa).

Residues 19-28 (AGLSFGNEAS), asparagine 110, and 137-138 (HR) contribute to the substrate site. Residue glutamate 174 is part of the active site. Residue arginine 212 participates in substrate binding. Residue histidine 248 is part of the active site. Substrate-binding residues include aspartate 250 and asparagine 359. Catalysis depends on cysteine 365, which acts as the Nucleophile.

The protein belongs to the succinylarginine dihydrolase family. As to quaternary structure, homodimer.

The enzyme catalyses N(2)-succinyl-L-arginine + 2 H2O + 2 H(+) = N(2)-succinyl-L-ornithine + 2 NH4(+) + CO2. It functions in the pathway amino-acid degradation; L-arginine degradation via AST pathway; L-glutamate and succinate from L-arginine: step 2/5. In terms of biological role, catalyzes the hydrolysis of N(2)-succinylarginine into N(2)-succinylornithine, ammonia and CO(2). In Salmonella enteritidis PT4 (strain P125109), this protein is N-succinylarginine dihydrolase.